The following is a 712-amino-acid chain: Interleukin-1 receptor-associated kinase 1 (712 aa).

A Death domain is found at 27–106; that stretch reads MCRFYKVMDA…DIITAWHPPA (80 aa). At Thr66 the chain carries Phosphothreonine; by PKC/PRKCI. The interval 105–187 is disordered; it reads PAPLPSPGTT…STKPGPESSV (83 aa). The proST region stretch occupies residues 110–211; it reads SPGTTAPRPS…LCEISRGTHN (102 aa). Over residues 115-133 the composition is skewed to low complexity; sequence APRPSSIPAPAEAEAWSPR. Residue Ser131 is modified to Phosphoserine. A Glycyl lysine isopeptide (Lys-Gly) (interchain with G-Cter in ubiquitin) cross-link involves residue Lys134. Residues 137-154 show a composition bias toward polar residues; it reads SSASTFLSPAFPGSQTHS. A Glycyl lysine isopeptide (Lys-Gly) (interchain with G-Cter in ubiquitin) cross-link involves residue Lys180. Thr209 is modified (phosphothreonine; by IRAK4). Residues 212 to 521 enclose the Protein kinase domain; sequence FSEELKIGEG…TQVYERLEKL (310 aa). Residues 218-226 and Lys239 each bind ATP; that span reads IGEGGFGCV. The Proton acceptor role is filled by Asp340. ATP is bound by residues 342-345 and Asp358; that span reads KSSN. A phosphoserine mark is found at Ser371 and Ser375. Thr387 carries the post-translational modification Phosphothreonine. Disordered stretches follow at residues 532–591, 613–660, and 690–712; these read SEAA…SDES, APLR…PPQI, and SSLP…EFQS. Over residues 543 to 553 the composition is skewed to polar residues; that stretch reads QENSYVSSTGR. The residue at position 556 (Ser556) is a Phosphoserine. Composition is skewed to low complexity over residues 562-575 and 643-658; these read QPLA…AQAA and EGLA…SEPP.

The protein belongs to the protein kinase superfamily. TKL Ser/Thr protein kinase family. Pelle subfamily. As to quaternary structure, homodimer. Forms a complex with TRAF6, PELI1, IRAK4 and MYD88. Direct binding of SMAD6 to PELI1 prevents complex formation and hence negatively regulates IL1R-TLR signaling and eventually NF-kappa-B-mediated gene expression. The TRAF6-PELI1-IRAK4-MYD88 complex recruits MAP3K7/TAK1, TAB1 and TAB2 to mediate NF-kappa-B activation. Interaction with MYD88 recruits IRAK1 to the stimulated receptor complex. Interacts with TOLLIP; this interaction occurs in the cytosol prior to receptor activation. Interacts with IL1RL1. Interacts with PELI1 and TRAF6. Interacts (when polyubiquitinated) with IKBKG/NEMO. Interacts with RSAD2/viperin. Interacts with IRAK1BP1. Interacts with PELI2. Interacts with ZC3H12A; this interaction increases the interaction between ZC3H12A and IKBKB/IKKB. Interacts with IRAK4. Interacts with PELI3. Interacts with INAVA; the interaction takes place upon PRR stimulation. Interacts (via C-terminus) with NFATC4 (via N-terminus). In terms of assembly, (Microbial infection) Interacts with mumps virus protein SH; this interaction inhibits downstream NF-kappa-B pathway activation. (Microbial infection) Interacts with alphaviruses SINV, CHIKV, RRV, VEEV and EEEV capsid proteins; the interactions lead to inhibition of IRAK1-dependent signaling. It depends on Mg(2+) as a cofactor. Post-translationally, following recruitment on the activated receptor complex, phosphorylated on Thr-209, probably by IRAK4, resulting in a conformational change of the kinase domain, allowing further phosphorylations to take place. Thr-387 phosphorylation in the activation loop is required to achieve full enzymatic activity. In terms of processing, polyubiquitinated by TRAF6 after cell stimulation with IL-1-beta by PELI1, PELI2 and PELI3. Polyubiquitination occurs with polyubiquitin chains linked through 'Lys-63'. Ubiquitination promotes interaction with NEMO/IKBKG. Also sumoylated; leading to nuclear translocation. Isoform 1 and isoform 2 are ubiquitously expressed in all tissues examined, with isoform 1 being more strongly expressed than isoform 2.

The protein localises to the cytoplasm. The protein resides in the nucleus. It localises to the lipid droplet. The enzyme catalyses L-seryl-[protein] + ATP = O-phospho-L-seryl-[protein] + ADP + H(+). The catalysed reaction is L-threonyl-[protein] + ATP = O-phospho-L-threonyl-[protein] + ADP + H(+). Functionally, serine/threonine-protein kinase that plays a critical role in initiating innate immune response against foreign pathogens. Involved in Toll-like receptor (TLR) and IL-1R signaling pathways. Is rapidly recruited by MYD88 to the receptor-signaling complex upon TLR activation. Association with MYD88 leads to IRAK1 phosphorylation by IRAK4 and subsequent autophosphorylation and kinase activation. Phosphorylates E3 ubiquitin ligases Pellino proteins (PELI1, PELI2 and PELI3) to promote pellino-mediated polyubiquitination of IRAK1. Then, the ubiquitin-binding domain of IKBKG/NEMO binds to polyubiquitinated IRAK1 bringing together the IRAK1-MAP3K7/TAK1-TRAF6 complex and the NEMO-IKKA-IKKB complex. In turn, MAP3K7/TAK1 activates IKKs (CHUK/IKKA and IKBKB/IKKB) leading to NF-kappa-B nuclear translocation and activation. Alternatively, phosphorylates TIRAP to promote its ubiquitination and subsequent degradation. Phosphorylates the interferon regulatory factor 7 (IRF7) to induce its activation and translocation to the nucleus, resulting in transcriptional activation of type I IFN genes, which drive the cell in an antiviral state. When sumoylated, translocates to the nucleus and phosphorylates STAT3. The chain is Interleukin-1 receptor-associated kinase 1 from Homo sapiens (Human).